The following is a 145-amino-acid chain: Deoxyuridine 5'-triphosphate nucleotidohydrolase (145 aa).

Residues Arg-65–Gly-67, Asn-78, and Thr-82–Asp-84 contribute to the substrate site.

It belongs to the dUTPase family. The cofactor is Mg(2+).

It carries out the reaction dUTP + H2O = dUMP + diphosphate + H(+). Its pathway is pyrimidine metabolism; dUMP biosynthesis; dUMP from dCTP (dUTP route): step 2/2. This enzyme is involved in nucleotide metabolism: it produces dUMP, the immediate precursor of thymidine nucleotides and it decreases the intracellular concentration of dUTP so that uracil cannot be incorporated into DNA. The sequence is that of Deoxyuridine 5'-triphosphate nucleotidohydrolase from Clostridium tetani (strain Massachusetts / E88).